The sequence spans 151 residues: Small ribosomal subunit protein uS11A (151 aa).

The disordered stretch occupies residues 131-151 (DVTPIPSDSTRRKGGRRGRRL). Basic residues predominate over residues 142–151 (RKGGRRGRRL).

Belongs to the universal ribosomal protein uS11 family.

In Drosophila melanogaster (Fruit fly), this protein is Small ribosomal subunit protein uS11A.